Reading from the N-terminus, the 149-residue chain is Large ribosomal subunit protein bL9 (149 aa).

Belongs to the bacterial ribosomal protein bL9 family.

Functionally, binds to the 23S rRNA. The protein is Large ribosomal subunit protein bL9 of Endomicrobium trichonymphae.